Consider the following 534-residue polypeptide: Lysophosphatidylcholine acyltransferase 1 (534 aa).

The disordered stretch occupies residues M1 to R22. Residues M1–R57 are Cytoplasmic-facing. Over residues G7–R22 the composition is skewed to low complexity. Residues L58–G78 form a helical; Signal-anchor for type II membrane protein membrane-spanning segment. The Lumenal portion of the chain corresponds to S79 to D534. The short motif at H135–D140 is the HXXXXD motif element. EF-hand domains follow at residues P379–P414 and V451–F486. Ca(2+)-binding residues include D392, S394, S396, E398, and E403. Residues G512–D534 form a disordered region. A compositionally biased stretch (basic and acidic residues) spans D523 to D534. A Di-lysine motif motif is present at residues K531–D534.

This sequence belongs to the 1-acyl-sn-glycerol-3-phosphate acyltransferase family. As to expression, erythrocytes.

It is found in the endoplasmic reticulum membrane. Its subcellular location is the golgi apparatus membrane. The protein localises to the cell membrane. The protein resides in the lipid droplet. It catalyses the reaction a 1-acyl-sn-glycero-3-phosphocholine + an acyl-CoA = a 1,2-diacyl-sn-glycero-3-phosphocholine + CoA. The catalysed reaction is a 1-acyl-sn-glycero-3-phosphate + an acyl-CoA = a 1,2-diacyl-sn-glycero-3-phosphate + CoA. It carries out the reaction a 1-O-alkyl-sn-glycero-3-phosphocholine + acetyl-CoA = a 1-O-alkyl-2-acetyl-sn-glycero-3-phosphocholine + CoA. The enzyme catalyses a 1-O-(1Z-alkenyl)-sn-glycero-3-phosphocholine + an acyl-CoA = a 1-O-(1Z-alkenyl)-2-acyl-sn-glycero-3-phosphocholine + CoA. It catalyses the reaction 1-acyl-sn-glycero-3-phospho-(1'-sn-glycerol) + an acyl-CoA = a 1,2-diacyl-sn-glycero-3-phospho-(1'-sn-glycerol) + CoA. The catalysed reaction is 1-hexadecanoyl-sn-glycero-3-phosphocholine + (9Z)-octadecenoyl-CoA = 1-hexadecanoyl-2-(9Z-octadecenoyl)-sn-glycero-3-phosphocholine + CoA. It carries out the reaction 1-hexadecanoyl-sn-glycero-3-phosphocholine + hexadecanoyl-CoA = 1,2-dihexadecanoyl-sn-glycero-3-phosphocholine + CoA. The enzyme catalyses 1-O-hexadecyl-sn-glycero-3-phosphocholine + hexadecanoyl-CoA = 1-O-hexadecyl-2-hexadecanoyl-sn-glycero-3-phosphocholine + CoA. It catalyses the reaction a 1-O-(1Z-alkenyl)-sn-glycero-3-phosphocholine + hexadecanoyl-CoA = 1-O-(1Z)-alkenyl-2-hexadecanoyl-sn-glycero-3-phosphocholine + CoA. The catalysed reaction is 1-hexadecanoyl-sn-glycero-3-phospho-(1'-sn-glycerol) + hexadecanoyl-CoA = 1,2-dihexadecanoyl-sn-glycero-3-phospho-(1'-sn-glycerol) + CoA. It carries out the reaction 1-dodecanoyl-sn-glycero-3-phosphocholine + hexadecanoyl-CoA = 1-dodecanoyl-2-hexadecanoyl-sn-glycero-3-phosphocholine + CoA. The enzyme catalyses 1-tetradecanoyl-sn-glycero-3-phosphocholine + hexadecanoyl-CoA = 1-tetradecanoyl-2-hexadecanoyl-sn-glycero-3-phosphocholine + CoA. It catalyses the reaction 1-O-octadecyl-sn-glycero-3-phosphocholine + hexadecanoyl-CoA = 1-O-octadecyl-2-hexadecanoyl-sn-glycero-3-phosphocholine + CoA. The catalysed reaction is 1-octadecanoyl-sn-glycero-3-phosphocholine + hexadecanoyl-CoA = 1-octadecanoyl-2-hexadecanoyl-sn-glycero-3-phosphocholine + CoA. It carries out the reaction 1-(9Z-octadecenoyl)-sn-glycero-3-phosphocholine + hexadecanoyl-CoA = 1-(9Z-octadecenoyl)-2-hexadecanoyl-sn-glycero-3-phosphocholine + CoA. The enzyme catalyses 1-eicosanoyl-sn-glycero-3-phosphocholine + hexadecanoyl-CoA = 1-eicosanoyl-2-hexadecanoyl-sn-glycero-3-phosphocholine + CoA. It catalyses the reaction hexanoyl-CoA + 1-hexadecanoyl-sn-glycero-3-phosphocholine = 1-hexadecanoyl-2-hexanoyl-sn-glycero-3-phosphocholine + CoA. The catalysed reaction is octanoyl-CoA + 1-hexadecanoyl-sn-glycero-3-phosphocholine = 1-hexadecanoyl-2-octanoyl-sn-glycero-3-phosphocholine + CoA. It carries out the reaction decanoyl-CoA + 1-hexadecanoyl-sn-glycero-3-phosphocholine = 1-hexadecanoyl-2-decanoyl-sn-glycero-3-phosphocholine + CoA. The enzyme catalyses dodecanoyl-CoA + 1-hexadecanoyl-sn-glycero-3-phosphocholine = 1-hexadecanoyl-2-dodecanoyl-sn-glycero-3-phosphocholine + CoA. It catalyses the reaction tetradecanoyl-CoA + 1-hexadecanoyl-sn-glycero-3-phosphocholine = 1-hexadecanoyl-2-tetradecanoyl-sn-glycero-3-phosphocholine + CoA. The catalysed reaction is (9Z,12Z)-octadecadienoyl-CoA + 1-hexadecanoyl-sn-glycero-3-phosphocholine = 1-hexadecanoyl-2-(9Z,12Z-octadecadienoyl)-sn-glycero-3-phosphocholine + CoA. It carries out the reaction (4Z,7Z,10Z,13Z,16Z,19Z)-docosahexaenoyl-CoA + 1-hexadecanoyl-sn-glycero-3-phosphocholine = 1-hexadecanoyl-2-(4Z,7Z,10Z,13Z,16Z,19Z-docosahexaenoyl)-sn-glycero-3-phosphocholine + CoA. The enzyme catalyses 1-hexadecanoyl-sn-glycero-3-phosphocholine + acetyl-CoA = 1-hexadecanoyl-2-acetyl-sn-glycero-3-phosphocholine + CoA. It catalyses the reaction eicosanoyl-CoA + 1-hexadecanoyl-sn-glycero-3-phosphocholine = 1-hexadecanoyl-2-eicosanoyl-sn-glycero-3-phosphocholine + CoA. The catalysed reaction is 1-O-hexadecyl-sn-glycero-3-phosphocholine + acetyl-CoA = 1-O-hexadecyl-2-acetyl-sn-glycero-3-phosphocholine + CoA. It carries out the reaction a 1-acyl-sn-glycero-3-phosphocholine + hexadecanoyl-CoA = 1-acyl-2-hexadecanoyl-sn-glycero-3-phosphocholine + CoA. The enzyme catalyses a 1-acyl-sn-glycero-3-phosphate + hexadecanoyl-CoA = 1-acyl-2-hexadecanoyl-sn-glycero-3-phosphate + CoA. It catalyses the reaction 1-acyl-sn-glycero-3-phospho-(1'-sn-glycerol) + hexadecanoyl-CoA = 1-acyl-2-hexadecanoyl-sn-glycero-3-phospho-(1'-sn-glycerol) + CoA. The protein operates within lipid metabolism; phospholipid metabolism. In terms of biological role, exhibits acyltransferase activity. Exhibits acetyltransferase activity. Activity is calcium-independent. Catalyzes the conversion of lysophosphatidylcholine (1-acyl-sn-glycero-3-phosphocholine or LPC) into phosphatidylcholine (1,2-diacyl-sn-glycero-3-phosphocholine or PC). Catalyzes the conversion 1-acyl-sn-glycerol-3-phosphate (lysophosphatidic acid or LPA) into 1,2-diacyl-sn-glycerol-3-phosphate (phosphatidic acid or PA) by incorporating an acyl moiety at the sn-2 position of the glycerol backbone. Displays a clear preference for saturated fatty acyl-CoAs, and 1-myristoyl or 1-palmitoyl LPC as acyl donors and acceptors, respectively. Involved in platelet-activating factor (PAF) biosynthesis by catalyzing the conversion of the PAF precursor, 1-O-alkyl-sn-glycero-3-phosphocholine (lyso-PAF) into 1-O-alkyl-2-acetyl-sn-glycero-3-phosphocholine (PAF). May synthesize phosphatidylcholine in pulmonary surfactant, thereby playing a pivotal role in respiratory physiology. Involved in the regulation of lipid droplet number and size. This is Lysophosphatidylcholine acyltransferase 1 (LPCAT1) from Homo sapiens (Human).